The chain runs to 313 residues: 4-diphosphocytidyl-2-C-methyl-D-erythritol kinase (313 aa).

Residue Lys-11 is part of the active site. 99-109 (PVAAGLAGGST) serves as a coordination point for ATP. Residue Asp-141 is part of the active site.

The protein belongs to the GHMP kinase family. IspE subfamily.

It catalyses the reaction 4-CDP-2-C-methyl-D-erythritol + ATP = 4-CDP-2-C-methyl-D-erythritol 2-phosphate + ADP + H(+). The protein operates within isoprenoid biosynthesis; isopentenyl diphosphate biosynthesis via DXP pathway; isopentenyl diphosphate from 1-deoxy-D-xylulose 5-phosphate: step 3/6. In terms of biological role, catalyzes the phosphorylation of the position 2 hydroxy group of 4-diphosphocytidyl-2C-methyl-D-erythritol. The polypeptide is 4-diphosphocytidyl-2-C-methyl-D-erythritol kinase (Microcystis aeruginosa (strain NIES-843 / IAM M-2473)).